Reading from the N-terminus, the 104-residue chain is Flagellar hook-basal body complex protein FliE (104 aa).

This sequence belongs to the FliE family.

The protein localises to the bacterial flagellum basal body. The sequence is that of Flagellar hook-basal body complex protein FliE from Salmonella agona (strain SL483).